The chain runs to 190 residues: Holliday junction branch migration complex subunit RuvA (190 aa).

The interval 1 to 64 (MIGRITGTLI…EDAQLLYGFG (64 aa)) is domain I. The interval 65–137 (SSAERSTFRE…MRGKLGADIG (73 aa)) is domain II. Residues 137 to 141 (GATPH) are flexible linker. The segment at 142 to 190 (AASGHQSDILNALLALGYSDKESQAALKKLPDGVDVSEGIRLALKALVR) is domain III.

Belongs to the RuvA family. In terms of assembly, homotetramer. Forms an RuvA(8)-RuvB(12)-Holliday junction (HJ) complex. HJ DNA is sandwiched between 2 RuvA tetramers; dsDNA enters through RuvA and exits via RuvB. An RuvB hexamer assembles on each DNA strand where it exits the tetramer. Each RuvB hexamer is contacted by two RuvA subunits (via domain III) on 2 adjacent RuvB subunits; this complex drives branch migration. In the full resolvosome a probable DNA-RuvA(4)-RuvB(12)-RuvC(2) complex forms which resolves the HJ.

It localises to the cytoplasm. In terms of biological role, the RuvA-RuvB-RuvC complex processes Holliday junction (HJ) DNA during genetic recombination and DNA repair, while the RuvA-RuvB complex plays an important role in the rescue of blocked DNA replication forks via replication fork reversal (RFR). RuvA specifically binds to HJ cruciform DNA, conferring on it an open structure. The RuvB hexamer acts as an ATP-dependent pump, pulling dsDNA into and through the RuvAB complex. HJ branch migration allows RuvC to scan DNA until it finds its consensus sequence, where it cleaves and resolves the cruciform DNA. The polypeptide is Holliday junction branch migration complex subunit RuvA (Bordetella pertussis (strain Tohama I / ATCC BAA-589 / NCTC 13251)).